The chain runs to 396 residues: Elongation factor Tu (396 aa).

The tr-type G domain occupies 11 to 205; that stretch reads KPHVNIGTIG…TIDEYIPTPV (195 aa). The interval 20 to 27 is G1; sequence GHVDHGKT. Position 20-27 (20-27) interacts with GTP; the sequence is GHVDHGKT. Thr27 is a binding site for Mg(2+). A G2 region spans residues 61–65; sequence GITIN. The G3 stretch occupies residues 82–85; it reads DAPG. Residues 82-86 and 137-140 each bind GTP; these read DAPGH and NKTD. Residues 137–140 are G4; it reads NKTD. The interval 175-177 is G5; sequence SAL.

The protein belongs to the TRAFAC class translation factor GTPase superfamily. Classic translation factor GTPase family. EF-Tu/EF-1A subfamily. Monomer.

The protein resides in the cytoplasm. It catalyses the reaction GTP + H2O = GDP + phosphate + H(+). In terms of biological role, GTP hydrolase that promotes the GTP-dependent binding of aminoacyl-tRNA to the A-site of ribosomes during protein biosynthesis. The sequence is that of Elongation factor Tu from Lacticaseibacillus casei (strain BL23) (Lactobacillus casei).